We begin with the raw amino-acid sequence, 140 residues long: Ribosome-binding factor A (140 aa).

The disordered stretch occupies residues 121–140 (KTEQTSADDDADRLDSEDRS).

Belongs to the RbfA family. In terms of assembly, monomer. Binds 30S ribosomal subunits, but not 50S ribosomal subunits or 70S ribosomes.

It is found in the cytoplasm. Functionally, one of several proteins that assist in the late maturation steps of the functional core of the 30S ribosomal subunit. Associates with free 30S ribosomal subunits (but not with 30S subunits that are part of 70S ribosomes or polysomes). Required for efficient processing of 16S rRNA. May interact with the 5'-terminal helix region of 16S rRNA. In Psychrobacter sp. (strain PRwf-1), this protein is Ribosome-binding factor A.